Consider the following 469-residue polypeptide: tRNA-2-methylthio-N(6)-dimethylallyladenosine synthase (469 aa).

Positions 22 to 142 constitute an MTTase N-terminal domain; the sequence is RKVFIKTYGC…LPEALRRAKE (121 aa). Positions 31, 67, 105, 183, 187, and 190 each coordinate [4Fe-4S] cluster. Residues 169-401 enclose the Radical SAM core domain; the sequence is RARGVTAFLT…QALLLKQQQE (233 aa). Residues 404 to 466 form the TRAM domain; the sequence is ESCIGKEIDL…NNSLFAERAE (63 aa).

It belongs to the methylthiotransferase family. MiaB subfamily. In terms of assembly, monomer. The cofactor is [4Fe-4S] cluster.

It is found in the cytoplasm. It carries out the reaction N(6)-dimethylallyladenosine(37) in tRNA + (sulfur carrier)-SH + AH2 + 2 S-adenosyl-L-methionine = 2-methylsulfanyl-N(6)-dimethylallyladenosine(37) in tRNA + (sulfur carrier)-H + 5'-deoxyadenosine + L-methionine + A + S-adenosyl-L-homocysteine + 2 H(+). Catalyzes the methylthiolation of N6-(dimethylallyl)adenosine (i(6)A), leading to the formation of 2-methylthio-N6-(dimethylallyl)adenosine (ms(2)i(6)A) at position 37 in tRNAs that read codons beginning with uridine. The protein is tRNA-2-methylthio-N(6)-dimethylallyladenosine synthase of Rhizobium leguminosarum bv. trifolii (strain WSM2304).